The following is a 339-amino-acid chain: Putative zinc metalloprotease FN1322 (339 aa).

His-17 contacts Zn(2+). Residue Glu-18 is part of the active site. Zn(2+) is bound at residue His-21. The next 3 membrane-spanning stretches (helical) occupy residues 88–110, 262–284, and 318–335; these read FIVL…FVTA, FGWI…LNLL, and GMIL…NDVW. The region spanning 96-179 is the PDZ domain; that stretch reads FMNFLMAFIL…ITALVERNGK (84 aa).

It belongs to the peptidase M50B family. Requires Zn(2+) as cofactor.

Its subcellular location is the cell membrane. In Fusobacterium nucleatum subsp. nucleatum (strain ATCC 25586 / DSM 15643 / BCRC 10681 / CIP 101130 / JCM 8532 / KCTC 2640 / LMG 13131 / VPI 4355), this protein is Putative zinc metalloprotease FN1322.